We begin with the raw amino-acid sequence, 368 residues long: Phosphate acyltransferase (368 aa).

Belongs to the PlsX family. Homodimer. Probably interacts with PlsY.

Its subcellular location is the cytoplasm. It catalyses the reaction a fatty acyl-[ACP] + phosphate = an acyl phosphate + holo-[ACP]. It functions in the pathway lipid metabolism; phospholipid metabolism. Its function is as follows. Catalyzes the reversible formation of acyl-phosphate (acyl-PO(4)) from acyl-[acyl-carrier-protein] (acyl-ACP). This enzyme utilizes acyl-ACP as fatty acyl donor, but not acyl-CoA. In Granulibacter bethesdensis (strain ATCC BAA-1260 / CGDNIH1), this protein is Phosphate acyltransferase.